The chain runs to 271 residues: Cytochrome b termination protein 1 (271 aa).

It is found in the mitochondrion. Functionally, involved in 5'-end processing of mitochondrial COB, 15S rRNA, and RPM1 transcript. May also have a role in 3'-end processing of the COB pre-mRNA. The protein is Cytochrome b termination protein 1 (CBT1) of Saccharomyces cerevisiae (strain ATCC 204508 / S288c) (Baker's yeast).